The chain runs to 544 residues: Membrane protein insertase YidC (544 aa).

5 helical membrane passes run N6–D26, K343–V363, L418–L438, L456–I476, and P497–V517.

This sequence belongs to the OXA1/ALB3/YidC family. Type 1 subfamily. In terms of assembly, interacts with the Sec translocase complex via SecD. Specifically interacts with transmembrane segments of nascent integral membrane proteins during membrane integration.

The protein resides in the cell inner membrane. In terms of biological role, required for the insertion and/or proper folding and/or complex formation of integral membrane proteins into the membrane. Involved in integration of membrane proteins that insert both dependently and independently of the Sec translocase complex, as well as at least some lipoproteins. Aids folding of multispanning membrane proteins. In Pectobacterium atrosepticum (strain SCRI 1043 / ATCC BAA-672) (Erwinia carotovora subsp. atroseptica), this protein is Membrane protein insertase YidC.